The primary structure comprises 466 residues: Alpha-1A adrenergic receptor (466 aa).

Over 1–27 the chain is Extracellular; the sequence is MVLLSENASEGSNCTHPPAQVNISKAI. 3 N-linked (GlcNAc...) asparagine glycosylation sites follow: asparagine 7, asparagine 13, and asparagine 22. A helical membrane pass occupies residues 28 to 51; sequence LLGVILGGLIIFGVLGNILVILSV. Over 52 to 64 the chain is Cytoplasmic; the sequence is ACHRHLHSVTHYY. Residues 65-88 traverse the membrane as a helical segment; sequence IVNLAVADLLLTSTVLPFSAIFEI. Over 89–99 the chain is Extracellular; sequence LGYWAFGRVFC. The cysteines at positions 99 and 176 are disulfide-linked. Residues 100–122 traverse the membrane as a helical segment; that stretch reads NIWAAVDVLCCTASIMGLCIISI. The Cytoplasmic portion of the chain corresponds to 123 to 143; that stretch reads DRYIGVSYPLRYPTIVTQRRG. Residues 144–167 traverse the membrane as a helical segment; sequence VRALLCVWALSLVISIGPLFGWRQ. Residues 168–181 are Extracellular-facing; sequence QAPEDETICQINEE. A helical membrane pass occupies residues 182–205; sequence PGYVLFSALGSFYVPLTIILVMYC. The Cytoplasmic portion of the chain corresponds to 206-273; it reads RVYVVAKRES…FSREKKAAKT (68 aa). Serine 215 bears the Phosphoserine; by PKA mark. The helical transmembrane segment at 274-297 threads the bilayer; that stretch reads LGIVVGCFVLCWLPFFLVMPIGSF. Over 298–305 the chain is Extracellular; the sequence is FPNFKPPE. The helical transmembrane segment at 306-329 threads the bilayer; the sequence is TVFKIVFWLGYLNSCINPIIYPCS. At 330–466 the chain is on the cytoplasmic side; sequence SQEFKKAFQN…ISLGENGEEV (137 aa). Residues 334-349 carry the Nuclear localization signal motif; sequence KKAFQNVLRIQCLRRR. Cysteine 345 is lipidated: S-palmitoyl cysteine.

The protein belongs to the G-protein coupled receptor 1 family. Adrenergic receptor subfamily. ADRA1A sub-subfamily. Homo- and heterooligomer. Heterooligomerizes with ADRA1B homooligomers in cardiac myocytes. Interacts with CAVIN4.

The protein localises to the nucleus membrane. Its subcellular location is the cell membrane. The protein resides in the cytoplasm. It localises to the membrane. It is found in the caveola. This alpha-adrenergic receptor mediates its action by association with G proteins that activate a phosphatidylinositol-calcium second messenger system. Its effect is mediated by G(q) and G(11) proteins. Nuclear ADRA1A-ADRA1B heterooligomers regulate phenylephrine (PE)-stimulated ERK signaling in cardiac myocytes. This chain is Alpha-1A adrenergic receptor (Adra1a), found in Mus musculus (Mouse).